A 106-amino-acid chain; its full sequence is Large ribosomal subunit protein eL42 (106 aa).

It belongs to the eukaryotic ribosomal protein eL42 family.

The polypeptide is Large ribosomal subunit protein eL42 (RPL44) (Kluyveromyces lactis (strain ATCC 8585 / CBS 2359 / DSM 70799 / NBRC 1267 / NRRL Y-1140 / WM37) (Yeast)).